A 45-amino-acid chain; its full sequence is Bacteriocin fulvocin-C (45 aa).

In terms of biological role, bacteriocin. The chain is Bacteriocin fulvocin-C from Myxococcus fulvus.